The sequence spans 428 residues: Elongation factor 1-alpha (428 aa).

The tr-type G domain occupies 5-215; it reads KPHINIVFIG…ALDQMPEPPK (211 aa). Positions 14–21 are G1; it reads GHVDHGKS. 14–21 is a GTP binding site; the sequence is GHVDHGKS. Ser21 provides a ligand contact to Mg(2+). The tract at residues 68–72 is G2; sequence GITID. Positions 89–92 are G3; that stretch reads DAPG. GTP-binding positions include 89–93 and 144–147; these read DAPGH and NKMD. The G4 stretch occupies residues 144 to 147; the sequence is NKMD. The G5 stretch occupies residues 181 to 183; it reads SAW.

Belongs to the TRAFAC class translation factor GTPase superfamily. Classic translation factor GTPase family. EF-Tu/EF-1A subfamily.

The protein resides in the cytoplasm. The enzyme catalyses GTP + H2O = GDP + phosphate + H(+). Functionally, GTP hydrolase that promotes the GTP-dependent binding of aminoacyl-tRNA to the A-site of ribosomes during protein biosynthesis. The protein is Elongation factor 1-alpha of Thermococcus celer.